The following is a 391-amino-acid chain: Alanine racemase (391 aa).

Lys38 serves as the catalytic Proton acceptor; specific for D-alanine. Lys38 bears the N6-(pyridoxal phosphate)lysine mark. Arg136 provides a ligand contact to substrate. The active-site Proton acceptor; specific for L-alanine is the Tyr267. Residue Met315 participates in substrate binding.

The protein belongs to the alanine racemase family. The cofactor is pyridoxal 5'-phosphate.

The enzyme catalyses L-alanine = D-alanine. Its pathway is amino-acid biosynthesis; D-alanine biosynthesis; D-alanine from L-alanine: step 1/1. In terms of biological role, catalyzes the interconversion of L-alanine and D-alanine. May also act on other amino acids. This Clostridium kluyveri (strain ATCC 8527 / DSM 555 / NBRC 12016 / NCIMB 10680 / K1) protein is Alanine racemase (alr).